The primary structure comprises 274 residues: Hydroxyethylthiazole kinase (274 aa).

A substrate-binding site is contributed by Met-54. Positions 129 and 175 each coordinate ATP. Gly-202 contacts substrate.

Belongs to the Thz kinase family. Mg(2+) serves as cofactor.

The catalysed reaction is 5-(2-hydroxyethyl)-4-methylthiazole + ATP = 4-methyl-5-(2-phosphooxyethyl)-thiazole + ADP + H(+). The protein operates within cofactor biosynthesis; thiamine diphosphate biosynthesis; 4-methyl-5-(2-phosphoethyl)-thiazole from 5-(2-hydroxyethyl)-4-methylthiazole: step 1/1. Its function is as follows. Catalyzes the phosphorylation of the hydroxyl group of 4-methyl-5-beta-hydroxyethylthiazole (THZ). This Granulibacter bethesdensis (strain ATCC BAA-1260 / CGDNIH1) protein is Hydroxyethylthiazole kinase.